We begin with the raw amino-acid sequence, 181 residues long: Large ribosomal subunit protein uL5 (181 aa).

Belongs to the universal ribosomal protein uL5 family. As to quaternary structure, part of the 50S ribosomal subunit; contacts the 5S rRNA and probably tRNA. Forms a bridge to the 30S subunit in the 70S ribosome.

Its function is as follows. This is one of the proteins that bind and probably mediate the attachment of the 5S RNA into the large ribosomal subunit, where it forms part of the central protuberance. In the 70S ribosome it contacts protein S13 of the 30S subunit (bridge B1b), connecting the 2 subunits; this bridge is implicated in subunit movement. May contact the P site tRNA; the 5S rRNA and some of its associated proteins might help stabilize positioning of ribosome-bound tRNAs. In Methanococcus aeolicus (strain ATCC BAA-1280 / DSM 17508 / OCM 812 / Nankai-3), this protein is Large ribosomal subunit protein uL5.